A 448-amino-acid chain; its full sequence is Ribosomal protein uS12 methylthiotransferase RimO (448 aa).

The region spanning 13–128 is the MTTase N-terminal domain; the sequence is KSFFITTLGC…AGEILRKNFP (116 aa). 6 residues coordinate [4Fe-4S] cluster: C22, C58, C91, C167, C171, and C174. A Radical SAM core domain is found at 153–382; sequence NYSKPYSYVK…AYLGTLKTIH (230 aa). Positions 383–448 constitute a TRAM domain; the sequence is QNRIGKIYPC…ELDMSGTWVD (66 aa).

This sequence belongs to the methylthiotransferase family. RimO subfamily. The cofactor is [4Fe-4S] cluster.

It is found in the cytoplasm. It catalyses the reaction L-aspartate(89)-[ribosomal protein uS12]-hydrogen + (sulfur carrier)-SH + AH2 + 2 S-adenosyl-L-methionine = 3-methylsulfanyl-L-aspartate(89)-[ribosomal protein uS12]-hydrogen + (sulfur carrier)-H + 5'-deoxyadenosine + L-methionine + A + S-adenosyl-L-homocysteine + 2 H(+). In terms of biological role, catalyzes the methylthiolation of an aspartic acid residue of ribosomal protein uS12. This chain is Ribosomal protein uS12 methylthiotransferase RimO, found in Leptospira biflexa serovar Patoc (strain Patoc 1 / Ames).